A 116-amino-acid polypeptide reads, in one-letter code: Large ribosomal subunit protein bL17 (116 aa).

The protein belongs to the bacterial ribosomal protein bL17 family. In terms of assembly, part of the 50S ribosomal subunit. Contacts protein L32.

The polypeptide is Large ribosomal subunit protein bL17 (Prochlorococcus marinus (strain MIT 9303)).